Reading from the N-terminus, the 112-residue chain is U15-hexatoxin-Hi1a (112 aa).

The N-terminal stretch at 1–18 (MNTLIAFAVLLLLSTTLG) is a signal peptide. Residues 19–73 (DTDDKVSHEEIQERKELSGISEELLLQQLEAVEAALMEKERLEEMEEDGNSREKR) constitute a propeptide that is removed on maturation. Intrachain disulfides connect Cys74/Cys88, Cys81/Cys93, and Cys87/Cys107.

It belongs to the neurotoxin 14 (magi-1) family. 08 (Ltx-4) subfamily. Expressed by the venom gland.

It is found in the secreted. In terms of biological role, probable ion channel inhibitor. This is U15-hexatoxin-Hi1a from Hadronyche infensa (Fraser island funnel-web spider).